Here is a 360-residue protein sequence, read N- to C-terminus: LETM1 domain-containing protein 1 (360 aa).

The required and sufficient for mitochondrial import stretch occupies residues 1–110 (MALSRVCWAR…KKARRIKTNM (110 aa)). At 1-137 (MALSRVCWAR…LRQFRQDVTK (137 aa)) the chain is on the cytoplasmic side. A helical membrane pass occupies residues 138–158 (CLFLGIISIPPFANYLVFLLM). The Mitochondrial intermembrane segment spans residues 159-360 (YLFPRQLLIR…LSTNYLGTRR (202 aa)). The 175-residue stretch at 186-360 (FRKQSHPEII…LSTNYLGTRR (175 aa)) folds into the Letm1 RBD domain.

Interacts with BRI3BP. Interacts (via C-terminal) with SMARCA4; the interaction regulates transcriptional expression of thermogenic genes in brown adipose tissue. Kidney, liver, skeletal muscle, heart and brain. Overexpressed in various tumors including leukemia, lymphoma, and carcinomas of the breast, kidney, ovary, stomach, colon and uterine cervix.

The protein localises to the mitochondrion outer membrane. The protein resides in the nucleus. Its subcellular location is the mitochondrion inner membrane. Functionally, plays an essential role for mitochondrial structure and function, as well as thermogenesis of brown adipocytes. In brown adipose tissue also localizes in the nucleus where it interacts with the chromatin remodeler SMARCA4 to regulate thermogenic genes expression, such as UCP1. May regulate phagocytosis and inflammatory responses to lipopolysaccharide in macrophages. Involved in tumorigenesis and may function as a negative regulator of the p53/TP53. This Homo sapiens (Human) protein is LETM1 domain-containing protein 1.